The chain runs to 1003 residues: MQMEFKEELCDMFSQIWDHIPDSQNFSEEIIVDEKIETVPMDVPAIVTHSTNVKLLEEMDVEIVHGLNPIKTLMFDGINDDDEQGNVGETRDEGYYTVEPIDEFVKTKTVQTLKSLRRKRGVTSQDGADDTNKHDNMHMMLQNGHTSIQSIEIEHDNAVPLSGVVIDNILNKYGQDKIFNLRKHNQYGTIYHISDVNMLCEELICNATQLNLPAAAVRRITFEFCRWLNETELLKLQCNQLEKFVSVDSTEWFKLPVSLYFDIPIMAKLLNIPYNLIIIREGVLFQLLSLSDTTFELQQVEHLDFHTNQILAIIIDDHVTVPLLPLKKLWNISDLAKNTDLPLDLCEDVSSYFKEEDKAINTYITPYIDPRIIFIAHRNPTDFMFMLPNIPYLTEVNSEIQIDKLSDVCEFEYNRYRKALFCVENLIEIHRWHSLVCFIHLLANGELTQSEQIFIAGISRTNEYYVELSPRDCLYNTIRASFSAYQAWFKDWRANRKIQKIQNNGNDSLHTVIEVKSQQECPNIEQNTSINVNNLFFNTIIKYLDHEQHRFNFSDFNQQIAHGHFEALHASVEFVSEIQITREFCDVIRSNLPLNLDIISLYSKSLSDYLKMDLVVYFPEYNELRLIDATKQFKIRFIEFNCTKKTITMFKYTTTFHASMQKSYNYQVSISNGMSNKEMFITCFKKESNLAVVKQFSLRNNHRYDGIIDQPNIIGKGRPNYPNTKEQSVDHHPKISQVKHASVEQGHLINNYDLMKFALCHQNYKRIFNNQLFSEAPISDESLFRLKLEVNTGQHILAFTHVSFYEDGKVKTTYVTFITVDIDCSHVHQALLPRCVFHIQKGKPILYAANKTFVTGGSERRIEVVFNHLKEYIKETGIRSRDIHTLNSKSDQLITTCLTPFILSSMSMRKALQDNGDLSFTSQCVRKCQMSFKDDRINLPCGTSVHESTVDLHKHACLLEYYRLGLYKEKNNMNRCGFSCVECHSRYPNQLCANVCRLICQGM.

This chain is Putative non-structural protein 4 (S4), found in Aedes pseudoscutellaris (Mosquito).